Here is a 479-residue protein sequence, read N- to C-terminus: Bifunctional protein HldE (479 aa).

Residues 1–319 (MTVILPDFLK…NVVQKYEYTK (319 aa)) form a ribokinase region. 195 to 198 (NMSE) serves as a coordination point for ATP. Asp-264 is a catalytic residue. Positions 346 to 479 (MTNGVFDILH…IDTMEINEIN (134 aa)) are cytidylyltransferase.

This sequence in the N-terminal section; belongs to the carbohydrate kinase PfkB family. The protein in the C-terminal section; belongs to the cytidylyltransferase family. Homodimer.

It catalyses the reaction D-glycero-beta-D-manno-heptose 7-phosphate + ATP = D-glycero-beta-D-manno-heptose 1,7-bisphosphate + ADP + H(+). The enzyme catalyses D-glycero-beta-D-manno-heptose 1-phosphate + ATP + H(+) = ADP-D-glycero-beta-D-manno-heptose + diphosphate. It participates in nucleotide-sugar biosynthesis; ADP-L-glycero-beta-D-manno-heptose biosynthesis; ADP-L-glycero-beta-D-manno-heptose from D-glycero-beta-D-manno-heptose 7-phosphate: step 1/4. Its pathway is nucleotide-sugar biosynthesis; ADP-L-glycero-beta-D-manno-heptose biosynthesis; ADP-L-glycero-beta-D-manno-heptose from D-glycero-beta-D-manno-heptose 7-phosphate: step 3/4. In terms of biological role, catalyzes the phosphorylation of D-glycero-D-manno-heptose 7-phosphate at the C-1 position to selectively form D-glycero-beta-D-manno-heptose-1,7-bisphosphate. Catalyzes the ADP transfer from ATP to D-glycero-beta-D-manno-heptose 1-phosphate, yielding ADP-D-glycero-beta-D-manno-heptose. The protein is Bifunctional protein HldE of Blochmanniella floridana.